A 110-amino-acid polypeptide reads, in one-letter code: Cytochrome c6 (110 aa).

Positions methionine 1–alanine 25 are cleaved as a signal peptide. Positions 39, 42, 43, and 83 each coordinate heme c.

The protein belongs to the cytochrome c family. PetJ subfamily. Monomer. Binds 1 heme c group covalently per subunit.

It is found in the cellular thylakoid lumen. Functions as an electron carrier between membrane-bound cytochrome b6-f and photosystem I in oxygenic photosynthesis. This is Cytochrome c6 from Gloeothece citriformis (strain PCC 7424) (Cyanothece sp. (strain PCC 7424)).